We begin with the raw amino-acid sequence, 544 residues long: Chaperonin GroEL (544 aa).

ATP-binding positions include 29–32, 86–90, glycine 413, 476–478, and aspartate 492; these read TLGP, DGTTT, and NAA.

The protein belongs to the chaperonin (HSP60) family. In terms of assembly, forms a cylinder of 14 subunits composed of two heptameric rings stacked back-to-back. Interacts with the co-chaperonin GroES.

Its subcellular location is the cytoplasm. The catalysed reaction is ATP + H2O + a folded polypeptide = ADP + phosphate + an unfolded polypeptide.. Functionally, together with its co-chaperonin GroES, plays an essential role in assisting protein folding. The GroEL-GroES system forms a nano-cage that allows encapsulation of the non-native substrate proteins and provides a physical environment optimized to promote and accelerate protein folding. In Bacillus cereus (strain G9842), this protein is Chaperonin GroEL.